Consider the following 415-residue polypeptide: MSSLQPVRGTHDLIGETQLRHAHVVETARRIAGLYGFDEWATPIFEDTRVFARSLGDTSDVVSKEMYSFEDRGGESLTLRPEGTAGVCRALVTNGLTQSLPQKVFYAGPMFRYERPQKGRYRQFHQIGAELIGAAEPLADAEAIAMGRDVLKALGIADETILDLNTLGDTESRAAWRTALIGYFTECRDQLSDDSRARLERNPLRILDSKAPQDRALVADAPRIGAFLTPEAVAFWDGLRSALDLMGVPFRENPGIVRGLDYYGHTAFEFVTERLGAQGTVLAGGRYDGLVAEMGGPRTPAIGWAGGIERLSMLLDATPAAPRPVAVVPMGEGAMGAAILLLQALRAGGVRAEIAYRGNTKKRLERANRIGATHAVLIGEDEVARGVAQVKALDDGSQAELALDAVTPYLAGLAG.

Belongs to the class-II aminoacyl-tRNA synthetase family. As to quaternary structure, homodimer.

The protein resides in the cytoplasm. It catalyses the reaction tRNA(His) + L-histidine + ATP = L-histidyl-tRNA(His) + AMP + diphosphate + H(+). The chain is Histidine--tRNA ligase from Gluconacetobacter diazotrophicus (strain ATCC 49037 / DSM 5601 / CCUG 37298 / CIP 103539 / LMG 7603 / PAl5).